A 1438-amino-acid polypeptide reads, in one-letter code: MAMTNEEKFKILADQIKITEHLDSEILENSELTRVDVKTSDRTWVFQITFPHFLTIENYLLFTGAIIEEFKTIADVKCNFTVKDKTNQDEFAIKYFSHCIDQTKLSPKVKGQLKQKRLIMSGDVLKVMCQNDVERDHFDKACNGSLIAAYQQCGFNISKVVFETDSAVNDGDLASLEAHIQEEDEKSAREATEKLEKMKAEKAKQQDNNESDVSKCQIGKPIQVENVRQIDSIIEEEFKAAVEGVIFDINLKELKSGRHIVELKVTDYTDSLVLKMFTRKNKDDLAHFKALSVGKWVRAQGRIEEDTFVRDLVMMMSDIEEIKKATKQDKAEDKRVEFHLHTSMSQMDGIPNISDYVDQAAKWGHKAIAVTDHNVVQAFPDAHSAAEKNGIKMIYGMEGMLVDDGVPIAYKPKDCDLKTATYVVFDVETTGLSNQYDKIIELAAVKVKDGEIIDKFERFSNPHERLSETIKNLTHISDDMLVDAPEIEEVLTEFKSWVGDAIFVAHNASFDMGFIDTGYEHVGIGASTNGVIDTLELSRTINTEYGKHGLNFLAKKYGVELTQHHRAIYDTEATAYMFIKMLKQLEALGVHNHQDINTSLSNEDAYKRARPNHVTLIVQNQDGLKNLFKIVSASLVQYYYRTPRIPRSLLDEYREGILVGSACDEGEVFTAVMQKDQSQVERIAKYYDFIEVQPPALYQDLIDRELVRDNETLHEIYNRLIRAGDVNNIPVIATGNAHYLNEHDAIARKILIAAQPGNPLNRSTLPKAHFRTTDEMLDELHFLGEEKAYELVVQNTNDLADKIERVVPIKDELFTPRMEGANEEIREMSYDNAKALYGDDLPQIVIDRLEKELESIIGNGFSVIYLISQRLVKKSLNDGYLVGSRGSVGSSFVATMTEITEVNPLPPHYICPECKQSEFFDDGSVGSGFDLPDKKCESCGCDLIKEGQDIPFETFLGFKGDKVPDIDLNFSGEYQPEAHNYTKELFGEDKVFRAGTIGTVAEKTAFGFVKGYLNDQGIHKRGAEIDRLVKGCTGVKRTTGQHPGGIIVVPDYMDIYDFTPVQFPADDQGSSWMTTHFDFHSIHDNVLKLDILGHDDPTMIRMLQDLSGIDPKTIPVDDKETMGIFSSPEPLGVTSDEILCKTGTFGVPEFGTGFVRQMLEDTKPTTFSELVRISGLSHGTDVWLGNAQDLIRSGKCDLASVICCRDDIMVYLMYNGLEPSLAFKTMEFVRKGKGLTDDMVEAMVDNEVPDWYLDSCRKIKYMFPKAHAAAYVLMAVRIAYFKVHYPLYYYASYFTVRASDFDLISMIKDKESIRNTVNDMYSRYMDLAKKEKDTLTVLEIMNEMAQRGYRMQPISLEKSKAFEFIIEGDTLIPPFIAVPGLGENVAQRIVEARDEGPFLSKEDLNKKAGLSQKVIEYLDELGSLPNLPDKAQLSIFDM.

The region spanning 422 to 578 (YVVFDVETTG…YDTEATAYMF (157 aa)) is the Exonuclease domain.

The protein belongs to the DNA polymerase type-C family. PolC subfamily.

The protein resides in the cytoplasm. The enzyme catalyses DNA(n) + a 2'-deoxyribonucleoside 5'-triphosphate = DNA(n+1) + diphosphate. Its function is as follows. Required for replicative DNA synthesis. This DNA polymerase also exhibits 3' to 5' exonuclease activity. The sequence is that of DNA polymerase III PolC-type from Staphylococcus saprophyticus subsp. saprophyticus (strain ATCC 15305 / DSM 20229 / NCIMB 8711 / NCTC 7292 / S-41).